Here is a 223-residue protein sequence, read N- to C-terminus: Ribonuclease 3 (223 aa).

The RNase III domain maps to 4-127; it reads LENLQKLLGY…VMGAVYLEAG (124 aa). Position 40 (E40) interacts with Mg(2+). D44 is a catalytic residue. Residues D113 and E116 each coordinate Mg(2+). The active site involves E116. Residues 154 to 223 enclose the DRBM domain; it reads DYKTALQEIT…AKIALEKMKK (70 aa).

Belongs to the ribonuclease III family. Homodimer. Requires Mg(2+) as cofactor.

It is found in the cytoplasm. It catalyses the reaction Endonucleolytic cleavage to 5'-phosphomonoester.. Its function is as follows. Digests double-stranded RNA. Involved in the processing of primary rRNA transcript to yield the immediate precursors to the large and small rRNAs (23S and 16S). Processes some mRNAs, and tRNAs when they are encoded in the rRNA operon. Processes pre-crRNA and tracrRNA of type II CRISPR loci if present in the organism. In Campylobacter curvus (strain 525.92), this protein is Ribonuclease 3.